Reading from the N-terminus, the 162-residue chain is uncharacterized protein (162 aa).

The HTH asnC-type domain maps to 6 to 99 (LDDLDRAILK…YVTKTLSGFP (94 aa)). The H-T-H motif DNA-binding region spans 25–44 (IAEISNQLKKPESTVHFRIK).

This is an uncharacterized protein from Pyrococcus horikoshii (strain ATCC 700860 / DSM 12428 / JCM 9974 / NBRC 100139 / OT-3).